The primary structure comprises 178 residues: Adenine phosphoribosyltransferase (178 aa).

This sequence belongs to the purine/pyrimidine phosphoribosyltransferase family. As to quaternary structure, homodimer.

It is found in the cytoplasm. It carries out the reaction AMP + diphosphate = 5-phospho-alpha-D-ribose 1-diphosphate + adenine. The protein operates within purine metabolism; AMP biosynthesis via salvage pathway; AMP from adenine: step 1/1. Catalyzes a salvage reaction resulting in the formation of AMP, that is energically less costly than de novo synthesis. The chain is Adenine phosphoribosyltransferase from Erythrobacter litoralis (strain HTCC2594).